A 67-amino-acid chain; its full sequence is Large ribosomal subunit protein uL30 (67 aa).

Belongs to the universal ribosomal protein uL30 family. As to quaternary structure, part of the 50S ribosomal subunit.

This Thermotoga neapolitana (strain ATCC 49049 / DSM 4359 / NBRC 107923 / NS-E) protein is Large ribosomal subunit protein uL30.